The chain runs to 1195 residues: Voltage-gated inwardly rectifying potassium channel KCNH7 (1195 aa).

Residues 1–412 (MPVRRGHVAP…YSPFKAVWDW (412 aa)) are Cytoplasmic-facing. The PAS domain occupies 41–70 (IIYCNDGFCEMTGFSRPDVMQKPCTCDFLH). The PAC domain occupies 92–144 (RKVEVTYYHKNGSTFICNTHIIPVKNQEGVAMMFIINFEYVTDEENAATPERV). S174 bears the Phosphoserine mark. Residues 194 to 216 (SVAMKHFKSPTKESCSPSEADDT) form a disordered region. A phosphoserine mark is found at S238 and S319. The chain crosses the membrane as a helical span at residues 413–433 (LILLLVIYTAIFTPYSAAFLL). The Extracellular segment spans residues 434–449 (NDREEQKRRECGYSCS). Residues 450–470 (PLNVVDLIVDIMFIIDILINF) traverse the membrane as a helical segment. The Cytoplasmic segment spans residues 471-494 (RTTYVNQNEEVVSDPAKIAIHYFK). The chain crosses the membrane as a helical span at residues 495–515 (GWFLIDMVAAIPFDLLIFGSG). Over 516–521 (SDETTT) the chain is Extracellular. Residues 522 to 542 (LIGLLKTARLLRLVRVARKLD) form a helical; Voltage-sensor membrane-spanning segment. Residues 543-549 (RYSEYGA) are Cytoplasmic-facing. The chain crosses the membrane as a helical span at residues 550–570 (AVLMLLMCIFALIAHWLACIW). Residues 571–614 (YAIGNVERPYLTDKIGWLDSLGTQIGKRYNDSDSSSGPSIKDKY) lie on the Extracellular side of the membrane. N-linked (GlcNAc...) asparagine glycosylation is present at N600. The segment at residues 615–635 (VTALYFTFSSLTSVGFGNVSP) is an intramembrane region (pore-forming). A Selectivity filter motif is present at residues 627 to 632 (SVGFGN). Residues 636 to 641 (NTNSEK) are Extracellular-facing. Residues 642–662 (IFSICVMLIGSLMYASIFGNV) traverse the membrane as a helical segment. At 663–1195 (SAIIQRLYSG…HVSDPGLPGK (533 aa)) the chain is on the cytoplasmic side. Residues 745–845 (AFRGASKGCL…IQREDLLEVL (101 aa)) form a cNMP-binding domain region. The disordered stretch occupies residues 870–915 (AKSQSVNDSEGDTGKLRRRRLSFESEGEKDFSKENSANDADDSTDT). Residues 890 to 902 (LSFESEGEKDFSK) are compositionally biased toward basic and acidic residues. Phosphoserine is present on residues S891 and S894. Residues 1027–1054 (YGEVEQRLDLLQEQLNRLESQMTTDIQA) adopt a coiled-coil conformation.

The protein belongs to the potassium channel family. H (Eag) (TC 1.A.1.20) subfamily. Kv11.3/KCNH7 sub-subfamily. The potassium channel is probably composed of a homo- or heterotetrameric complex of pore-forming alpha subunits that can associate only within their subfamily.

It localises to the cell membrane. It catalyses the reaction K(+)(in) = K(+)(out). Functionally, pore-forming (alpha) subunit of voltage-gated inwardly rectifying potassium channel. Exhibits faster activation and deactivation kinetics and slow inactivation at membrane potentials positive to 240 mV, resulting in the weakest inward rectification. The polypeptide is Voltage-gated inwardly rectifying potassium channel KCNH7 (Mus musculus (Mouse)).